A 926-amino-acid chain; its full sequence is Storkhead-box protein 2 (926 aa).

Disordered stretches follow at residues 1–32, 338–394, 452–529, 632–693, 724–803, and 825–926; these read MKKT…RSEK, EEEK…IPGG, EMPF…SYVD, GVKK…SLDK, LKSH…GTMQ, and LAPK…VTSV. Residues 18–32 show a composition bias toward basic and acidic residues; sequence FSDRASDRMRSRSEK. Positions 353–378 are enriched in basic residues; that stretch reads HSGRSKKSRTHRKSHGKSRSHSKTRV. Positions 379–394 are enriched in basic and acidic residues; it reads SKGDPSDGSHLDIPGG. The segment covering 463 to 472 has biased composition (basic residues); sequence SHSKVHRSHS. The span at 473–495 shows a compositional bias: basic and acidic residues; sequence HTQDRRSRNERSNKAKERSRSMD. Residues 518–529 show a composition bias toward polar residues; that stretch reads QDDQTPSQSYVD. Basic and acidic residues-rich tracts occupy residues 632–658 and 684–693; these read GVKK…EESP and HGAEPSSLDK. Residues 746-772 show a composition bias toward polar residues; sequence LGTSAAQATPASQRQQESGGNQETSFD. Over residues 785–799 the composition is skewed to basic and acidic residues; sequence GANKNTEEEKNREDV. 2 stretches are compositionally biased toward polar residues: residues 847–884 and 914–926; these read MDSS…QNPA and KPSN…VTSV.

This is Storkhead-box protein 2 (STOX2) from Macaca fascicularis (Crab-eating macaque).